Reading from the N-terminus, the 210-residue chain is Tumor protein D53 homolog (210 aa).

The stretch at 22–73 (VTDVDFTSMISEEEKEELKAELAKLEDEISTLRQVLAAKEKHLIEIKQKLGM) forms a coiled coil. Residues 185 to 197 (SSTAHASAQSSLA) are compositionally biased toward polar residues. Positions 185–210 (SSTAHASAQSSLAGTRLPESEEELQC) are disordered.

It belongs to the TPD52 family. As to quaternary structure, forms a homodimer or heterodimer with other members of the family.

The sequence is that of Tumor protein D53 homolog (TPD52L1) from Gallus gallus (Chicken).